The chain runs to 202 residues: Na(+)-translocating NADH-quinone reductase subunit E (202 aa).

6 consecutive transmembrane segments (helical) span residues 11–31, 35–55, 81–101, 114–134, 144–164, and 180–200; these read SVFI…FLAM, INAA…TVPA, FLSF…MEMV, GVFL…LFMV, VVYG…LAGI, and LGIT…FGGI.

The protein belongs to the NqrDE/RnfAE family. Composed of six subunits; NqrA, NqrB, NqrC, NqrD, NqrE and NqrF.

Its subcellular location is the cell inner membrane. The enzyme catalyses a ubiquinone + n Na(+)(in) + NADH + H(+) = a ubiquinol + n Na(+)(out) + NAD(+). In terms of biological role, NQR complex catalyzes the reduction of ubiquinone-1 to ubiquinol by two successive reactions, coupled with the transport of Na(+) ions from the cytoplasm to the periplasm. NqrA to NqrE are probably involved in the second step, the conversion of ubisemiquinone to ubiquinol. The chain is Na(+)-translocating NADH-quinone reductase subunit E from Cellvibrio japonicus (strain Ueda107) (Pseudomonas fluorescens subsp. cellulosa).